Here is a 521-residue protein sequence, read N- to C-terminus: Riboflavin transporter MCH5 (521 aa).

Disordered stretches follow at residues Met1–Tyr33 and Asn65–Ile96. The Cytoplasmic segment spans residues Met1–Gly103. A helical membrane pass occupies residues Phe104–Leu124. The N-linked (GlcNAc...) asparagine glycan is linked to Asn125. At Asn125–Ser143 the chain is on the extracellular side. A helical membrane pass occupies residues Val144–Ile164. Residues Ser165–Asn172 are Cytoplasmic-facing. A helical transmembrane segment spans residues Gly173–Ala193. An N-linked (GlcNAc...) asparagine glycan is attached at Asn194. Over Asn194–His200 the chain is Extracellular. The helical transmembrane segment at Phe201–Val221 threads the bilayer. At Ser222–Gly233 the chain is on the cytoplasmic side. Residues Thr234 to Leu254 form a helical membrane-spanning segment. The Extracellular portion of the chain corresponds to Arg255–Gly269. A helical membrane pass occupies residues Phe270–Ile290. Residues Leu291–Lys325 lie on the Cytoplasmic side of the membrane. The chain crosses the membrane as a helical span at residues Ala326–Ile346. Topologically, residues Asn347–Ala367 are extracellular. Residues Tyr368–Leu388 form a helical membrane-spanning segment. The Cytoplasmic portion of the chain corresponds to Ser389–Asn396. A helical membrane pass occupies residues Val397–Gly417. Residues Thr418–Asn422 are Extracellular-facing. Asn419 carries an N-linked (GlcNAc...) asparagine glycan. The chain crosses the membrane as a helical span at residues Met423–Val443. Residues Cys444–Met461 are Cytoplasmic-facing. Residues Tyr462–Ile482 traverse the membrane as a helical segment. Residues Lys483 to Asp487 are Extracellular-facing. The chain crosses the membrane as a helical span at residues Tyr488–Ile508. Residues Ser509–Phe521 lie on the Cytoplasmic side of the membrane.

It belongs to the major facilitator superfamily. Monocarboxylate porter (TC 2.A.1.13) family.

Its subcellular location is the cell membrane. Functionally, riboflavin transporter involved in riboflavin (vitamin B2) uptake. Does not act in the transport of monocarboxylic acids across the plasma membrane. The sequence is that of Riboflavin transporter MCH5 (MCH5) from Saccharomyces cerevisiae (strain ATCC 204508 / S288c) (Baker's yeast).